Reading from the N-terminus, the 68-residue chain is MAFLKKSLFLVLFLGLVSLSIGEEEKREEEEKNEEGANQEENAENKEKRFIGTLIPLALGALTKLFKG.

Residues 1-22 (MAFLKKSLFLVLFLGLVSLSIG) form the signal peptide. A disordered region spans residues 23-45 (EEEKREEEEKNEEGANQEENAEN). The propeptide occupies 23–47 (EEEKREEEEKNEEGANQEENAENKE). The segment covering 26 to 42 (KREEEEKNEEGANQEEN) has biased composition (acidic residues). Lys67 carries the lysine amide modification.

Expressed by the skin glands.

The protein localises to the secreted. Its function is as follows. Antimicrobial peptide that displays antibacterial and antiprotozoal activity. Exhibits antibacterial activity against the Gram-positive bacteria S.epidermidis ATCC 12228 (MIC=2 uM), E.casseliflavus ATCC 700327 (MIC=16 uM), S.aureus ATCC 25923 (MIC=4 uM) and E.faecalis ATCC 29212 (MIC=8 uM), and the Gram-negative bacteria E.coli ATCC 25922 (MIC=16 uM) and K.pneumoniae ATCC 13883 (MIC=4 uM). Displays antiprotozoal activity against the epimastigote form of T.cruzi (IC(50)=15.9 uM). Does not show antimicrobial activity against the Gram-negative bacterium P.aeruginosa ATCC 27853, or the fungi C.albicans ATCC 90028 and C.parapsilosis ATCC 22019. Shows high cytolytic activity against human erythrocytes (HC(50)=10 uM), and displays anti-proliferative effects against various cancer cell lines including MCF-7 breast cancer cells (IC(50)=13.7 uM), HeLa cervical adenocarcinoma cells (IC(50)=11.1 uM) and B16F10 murine melanoma cells (IC(50)=10.5 uM). The sequence is that of Figainin 1 from Boana raniceps (Chaco tree frog).